The chain runs to 76 residues: Putative snRNP Sm-like protein (76 aa).

One can recognise a Sm domain in the interval 4 to 76 (RPLDVIHKSL…VLAISPVEIE (73 aa)).

The protein belongs to the snRNP Sm proteins family.

This is Putative snRNP Sm-like protein from Thermococcus sibiricus (strain DSM 12597 / MM 739).